A 519-amino-acid chain; its full sequence is Probable anion transporter 3, chloroplastic (519 aa).

A chloroplast-targeting transit peptide spans 1 to 76 (MAPPGQLLPL…PPPPATSLPG (76 aa)). A compositionally biased stretch (pro residues) spans 56 to 72 (LPFAPPRRLSRPPPPAT). The segment at 56–82 (LPFAPPRRLSRPPPPATSLPGASPGGG) is disordered. 12 helical membrane passes run 100–120 (VAAMLGLALALCNADRVVMSV), 138–158 (VVQSSFLWGYLVSPIIGGALV), 166–186 (VMAYGVALWSLATFLSPWAAA), 188–208 (SLWLFLSTRVLLGMAEGVALP), 229–249 (IAMAGFQLGNTIGLLLSPIIM), 253–273 (GIFGPFVIFGLFGFLWVLVWI), 326–346 (WALISANAMHSWGYFVILSWM), 362–382 (AWFSALPWVMMAVLGYVAGVV), 403–423 (IGFVGPGVALLGLNAAKSPVI), 424–444 (ASAWLTIAVGLKSFGHSGFLV), 460–480 (MSNTAGTFAAILGTVGAGFFV), and 488–508 (GFLILTSLLYFSSTLFWDIFA).

The protein belongs to the major facilitator superfamily. Sodium/anion cotransporter (TC 2.A.1.14) family.

The protein localises to the plastid. It is found in the chloroplast membrane. In terms of biological role, probable anion transporter. The chain is Probable anion transporter 3, chloroplastic (PHT4;3) from Oryza sativa subsp. japonica (Rice).